The primary structure comprises 101 residues: Small ribosomal subunit protein uS14 (101 aa).

The disordered stretch occupies residues 1 to 22 (MAKVSSIKKNESRKKKSQSLHN). Residues 11-22 (ESRKKKSQSLHN) show a composition bias toward basic residues.

This sequence belongs to the universal ribosomal protein uS14 family. Part of the 30S ribosomal subunit. Contacts proteins S3 and S10.

In terms of biological role, binds 16S rRNA, required for the assembly of 30S particles and may also be responsible for determining the conformation of the 16S rRNA at the A site. This Rickettsia conorii (strain ATCC VR-613 / Malish 7) protein is Small ribosomal subunit protein uS14.